Here is a 227-residue protein sequence, read N- to C-terminus: Cytidylate kinase (227 aa).

12 to 20 (GPSGAGKGT) is a binding site for ATP.

This sequence belongs to the cytidylate kinase family. Type 1 subfamily.

It localises to the cytoplasm. The enzyme catalyses CMP + ATP = CDP + ADP. The catalysed reaction is dCMP + ATP = dCDP + ADP. The sequence is that of Cytidylate kinase from Salmonella arizonae (strain ATCC BAA-731 / CDC346-86 / RSK2980).